The following is an 89-amino-acid chain: UPF0367 protein CYA_1023 (89 aa).

The disordered stretch occupies residues 69 to 89 (TKSGGPGAPGTRPGFLAQLQG).

It belongs to the UPF0367 family.

This is UPF0367 protein CYA_1023 from Synechococcus sp. (strain JA-3-3Ab) (Cyanobacteria bacterium Yellowstone A-Prime).